The primary structure comprises 341 residues: 5-formaminoimidazole-4-carboxamide-1-(beta)-D-ribofuranosyl 5'-monophosphate synthetase (341 aa).

Residues H10 and T77 each contribute to the 5-amino-1-(5-phospho-beta-D-ribosyl)imidazole-4-carboxamide site. Residues 106-317 form the ATP-grasp domain; that stretch reads DRSLKERLMR…YYGLLFDEPI (212 aa). ATP-binding positions include 132–188 and E210; that span reads DTLV…VLAY. N238 contacts 5-amino-1-(5-phospho-beta-D-ribosyl)imidazole-4-carboxamide. Residues E277 and E290 each contribute to the Mg(2+) site.

The protein belongs to the phosphohexose mutase family. Mg(2+) serves as cofactor. The cofactor is Mn(2+).

It catalyses the reaction 5-amino-1-(5-phospho-beta-D-ribosyl)imidazole-4-carboxamide + formate + ATP = 5-formamido-1-(5-phospho-D-ribosyl)imidazole-4-carboxamide + ADP + phosphate. It participates in purine metabolism; IMP biosynthesis via de novo pathway; 5-formamido-1-(5-phospho-D-ribosyl)imidazole-4-carboxamide from 5-amino-1-(5-phospho-D-ribosyl)imidazole-4-carboxamide (formate route): step 1/1. In terms of biological role, catalyzes the ATP- and formate-dependent formylation of 5-aminoimidazole-4-carboxamide-1-beta-d-ribofuranosyl 5'-monophosphate (AICAR) to 5-formaminoimidazole-4-carboxamide-1-beta-d-ribofuranosyl 5'-monophosphate (FAICAR) in the absence of folates. This Cenarchaeum symbiosum (strain A) protein is 5-formaminoimidazole-4-carboxamide-1-(beta)-D-ribofuranosyl 5'-monophosphate synthetase.